The chain runs to 100 residues: Phosphoribosyl-ATP pyrophosphatase (100 aa).

This sequence belongs to the PRA-PH family.

Its subcellular location is the cytoplasm. It catalyses the reaction 1-(5-phospho-beta-D-ribosyl)-ATP + H2O = 1-(5-phospho-beta-D-ribosyl)-5'-AMP + diphosphate + H(+). It functions in the pathway amino-acid biosynthesis; L-histidine biosynthesis; L-histidine from 5-phospho-alpha-D-ribose 1-diphosphate: step 2/9. The chain is Phosphoribosyl-ATP pyrophosphatase from Haloquadratum walsbyi (strain DSM 16790 / HBSQ001).